Reading from the N-terminus, the 480-residue chain is Gamma-aminobutyric acid receptor subunit rho-1 (480 aa).

An N-terminal signal peptide occupies residues 1–21; the sequence is MLAVQNMKFGIFLLWWGWVLA. Residues 22-281 lie on the Extracellular side of the membrane; it reads AESTAHWPGR…LYINFTLRRH (260 aa). Positions 29–38 are enriched in basic and acidic residues; the sequence is PGREVHEPSR. The segment at 29 to 67 is disordered; that stretch reads PGREVHEPSRKGSRPQRQRRGAHDDAHKQGSPILRRSSD. Residues 39–48 are compositionally biased toward basic residues; it reads KGSRPQRQRR. R126 contacts 4-aminobutanoate. N141 carries an N-linked (GlcNAc...) asparagine glycan. Residue S190 participates in 4-aminobutanoate binding. C199 and C213 form a disulfide bridge. E218 lines the 4-aminobutanoate pocket. N-linked (GlcNAc...) asparagine glycans are attached at residues N235 and N275. The helical transmembrane segment at 282–302 threads the bilayer; it reads IFFFLLQTYFPATLMVMLSWV. Residues 303 to 314 are Cytoplasmic-facing; the sequence is SFWIDRRAVPAR. Residues 315–335 form a helical membrane-spanning segment; that stretch reads VPLGITTVLTMSTIITGVNAS. Residues 336-346 are Extracellular-facing; it reads MPRVSYIKAVD. The chain crosses the membrane as a helical span at residues 347–367; the sequence is IYLWVSFVFVFLSVLEYAAVN. At 368–458 the chain is on the cytoplasmic side; the sequence is YLTTVQERKE…MRINTHAIDK (91 aa). Residues 459–479 form a helical membrane-spanning segment; it reads YSRIIFPAAYILFNLIYWSIF. S480 is a topological domain (extracellular).

Belongs to the ligand-gated ion channel (TC 1.A.9) family. Gamma-aminobutyric acid receptor (TC 1.A.9.5) subfamily. GABRR1 sub-subfamily. As to quaternary structure, three rho subunits (rho-1/GBRR1, rho-2/GBRR2 and rho-3/GBRR3) coassemble either to form functional homopentamers or heteropentamers. Rho-1/GBRR1 subunits can also associate with alpha-1/GBRA1 subunits to form a functional GABAAR. Interacts with SQSTM1. As to expression, expressed in the cerebellum.

Its subcellular location is the postsynaptic cell membrane. The protein resides in the cell membrane. It carries out the reaction chloride(in) = chloride(out). Its activity is regulated as follows. Inhibited by TPMPA, a rho-specific antagonist, when forming a homopentamer. In contrast with other GABAARs, rho-1 GABAAR is not inhibited by bicuculline when forming a homopentamer. Functionally, rho subunit of the pentameric ligand-gated chloride channels responsible for mediating the effects of gamma-aminobutyric acid (GABA), the major inhibitory neurotransmitter in the brain. Rho-containing GABA-gated chloride channels are a subclass of GABA(A) receptors (GABAARs) entirely composed of rho subunits, where GABA molecules bind at the rho intersubunit interfaces. When activated by GABA, rho-GABAARs selectively allow the flow of chloride anions across the cell membrane down their electrochemical gradient. Rho-1 subunits are primarily expressed in retina where rho-1-containing GABAARs play a role in retinal neurotransmission. Rho-1 GABAARs are also involved in neuronal tonic (extrasynaptic) and phasic (synaptic) transmission in the Purkinje neurons of the cerebellum. Rho-1 GABAARs may also contribute to the regulation of glial development in the cerebellum by controlling extrasynaptic transmission. The sequence is that of Gamma-aminobutyric acid receptor subunit rho-1 from Mus musculus (Mouse).